The following is a 568-amino-acid chain: Protein adenylyltransferase SelO, mitochondrial (568 aa).

ATP-binding residues include G120, G122, R123, K144, D156, G157, R208, and R215. Catalysis depends on D287, which acts as the Proton acceptor. Residues N288 and D297 each coordinate Mg(2+). An ATP-binding site is contributed by D297.

It belongs to the SELO family. It depends on Mg(2+) as a cofactor. In terms of processing, forms probably one or more intrachain disulfide bridges.

The protein resides in the mitochondrion. It carries out the reaction L-tyrosyl-[protein] + ATP = O-(5'-adenylyl)-L-tyrosyl-[protein] + diphosphate. Functionally, catalyzes the transfer of adenosine 5'-monophosphate (AMP) to Tyr residues of target mitochondrial proteins (AMPylation). Involved in redox homeostasis by regulating the cellular response to oxidative stress. Regulates protein S-glutathionylation levels possibly by AMPylation of deglutathionylation enzymes such as glutaredoxins. The chain is Protein adenylyltransferase SelO, mitochondrial from Schizosaccharomyces pombe (strain 972 / ATCC 24843) (Fission yeast).